We begin with the raw amino-acid sequence, 254 residues long: Small ribosomal subunit protein uS2 (254 aa).

It belongs to the universal ribosomal protein uS2 family.

This Legionella pneumophila (strain Corby) protein is Small ribosomal subunit protein uS2.